The sequence spans 1319 residues: DNA-directed RNA polymerase subunit beta' (1319 aa).

The Zn(2+) site is built by cysteine 59, cysteine 61, cysteine 74, and cysteine 77. Residues aspartate 449, aspartate 451, and aspartate 453 each coordinate Mg(2+). The Zn(2+) site is built by cysteine 773, cysteine 846, cysteine 853, and cysteine 856.

The protein belongs to the RNA polymerase beta' chain family. In terms of assembly, the RNAP catalytic core consists of 2 alpha, 1 beta, 1 beta' and 1 omega subunit. When a sigma factor is associated with the core the holoenzyme is formed, which can initiate transcription. Mg(2+) is required as a cofactor. It depends on Zn(2+) as a cofactor.

The enzyme catalyses RNA(n) + a ribonucleoside 5'-triphosphate = RNA(n+1) + diphosphate. Functionally, DNA-dependent RNA polymerase catalyzes the transcription of DNA into RNA using the four ribonucleoside triphosphates as substrates. This Fusobacterium nucleatum subsp. nucleatum (strain ATCC 25586 / DSM 15643 / BCRC 10681 / CIP 101130 / JCM 8532 / KCTC 2640 / LMG 13131 / VPI 4355) protein is DNA-directed RNA polymerase subunit beta'.